A 249-amino-acid polypeptide reads, in one-letter code: UPF0758 protein Oant_1909 (249 aa).

The region spanning 127-249 (VLGSWNKVIE…HASFRGLGLI (123 aa)) is the MPN domain. Zn(2+) contacts are provided by His-198, His-200, and Asp-211. The short motif at 198–211 (HNHPSGDPTPSRAD) is the JAMM motif element.

The protein belongs to the UPF0758 family.

The polypeptide is UPF0758 protein Oant_1909 (Brucella anthropi (strain ATCC 49188 / DSM 6882 / CCUG 24695 / JCM 21032 / LMG 3331 / NBRC 15819 / NCTC 12168 / Alc 37) (Ochrobactrum anthropi)).